The primary structure comprises 198 residues: Na(+)-translocating NADH-quinone reductase subunit E (198 aa).

6 helical membrane-spanning segments follow: residues 11–31 (SVFI…FLAV), 35–55 (VSTA…AVPA), 77–97 (FLNF…LEMI), 110–130 (GIFL…SFMV), 140–160 (VVYG…LAGL), and 176–196 (LGIT…FSGI).

This sequence belongs to the NqrDE/RnfAE family. In terms of assembly, composed of six subunits; NqrA, NqrB, NqrC, NqrD, NqrE and NqrF.

The protein localises to the cell inner membrane. The enzyme catalyses a ubiquinone + n Na(+)(in) + NADH + H(+) = a ubiquinol + n Na(+)(out) + NAD(+). Functionally, NQR complex catalyzes the reduction of ubiquinone-1 to ubiquinol by two successive reactions, coupled with the transport of Na(+) ions from the cytoplasm to the periplasm. NqrA to NqrE are probably involved in the second step, the conversion of ubisemiquinone to ubiquinol. The polypeptide is Na(+)-translocating NADH-quinone reductase subunit E (Actinobacillus pleuropneumoniae serotype 5b (strain L20)).